The chain runs to 413 residues: Histidine--tRNA ligase (413 aa).

Belongs to the class-II aminoacyl-tRNA synthetase family. In terms of assembly, homodimer.

It localises to the cytoplasm. It carries out the reaction tRNA(His) + L-histidine + ATP = L-histidyl-tRNA(His) + AMP + diphosphate + H(+). This Rickettsia prowazekii (strain Madrid E) protein is Histidine--tRNA ligase (hisS).